The sequence spans 71 residues: Small ribosomal subunit protein bS21 (71 aa).

Belongs to the bacterial ribosomal protein bS21 family.

The sequence is that of Small ribosomal subunit protein bS21 from Baumannia cicadellinicola subsp. Homalodisca coagulata.